We begin with the raw amino-acid sequence, 397 residues long: Tryptophan synthase beta chain (397 aa).

Residue Lys-87 is modified to N6-(pyridoxal phosphate)lysine.

This sequence belongs to the TrpB family. In terms of assembly, tetramer of two alpha and two beta chains. It depends on pyridoxal 5'-phosphate as a cofactor.

The enzyme catalyses (1S,2R)-1-C-(indol-3-yl)glycerol 3-phosphate + L-serine = D-glyceraldehyde 3-phosphate + L-tryptophan + H2O. It functions in the pathway amino-acid biosynthesis; L-tryptophan biosynthesis; L-tryptophan from chorismate: step 5/5. Functionally, the beta subunit is responsible for the synthesis of L-tryptophan from indole and L-serine. This chain is Tryptophan synthase beta chain, found in Citrobacter koseri (strain ATCC BAA-895 / CDC 4225-83 / SGSC4696).